The chain runs to 305 residues: Superkiller complex protein 8 (305 aa).

N-acetylmethionine is present on Met1. The residue at position 2 (Thr2) is an N-acetylthreonine; in WD repeat-containing protein 61, N-terminally processed. WD repeat units lie at residues Ala14–Gln57, Gly62–Ser101, Ala104–Ser143, Thr146–Glu187, Gly188–Thr227, Gly230–Thr269, and Asp272–Ile305.

Belongs to the SKI8 family. In terms of assembly, component of the PAF1 complex, which consists of CDC73, PAF1, LEO1, CTR9, RTF1 and SKIC8. The PAF1 complex interacts with PHF5A. Within the PAF1 complex interacts directly with PHF5A. Component of the SKI complex which consists of SKIC2, SKIC3 and SKIC8.

The protein localises to the nucleus. It is found in the cytoplasm. Functionally, component of the PAF1 complex (PAF1C) which has multiple functions during transcription by RNA polymerase II and is implicated in regulation of development and maintenance of embryonic stem cell pluripotency. PAF1C associates with RNA polymerase II through interaction with POLR2A CTD non-phosphorylated and 'Ser-2'- and 'Ser-5'-phosphorylated forms and is involved in transcriptional elongation, acting both independently and synergistically with TCEA1 and in cooperation with the DSIF complex and HTATSF1. PAF1C is required for transcription of Hox and Wnt target genes. PAF1C is involved in hematopoiesis and stimulates transcriptional activity of KMT2A/MLL1; it promotes leukemogenesis through association with KMT2A/MLL1-rearranged oncoproteins, such as KMT2A/MLL1-MLLT3/AF9 and KMT2A/MLL1-MLLT1/ENL. PAF1C is involved in histone modifications such as ubiquitination of histone H2B and methylation on histone H3 'Lys-4' (H3K4me3). PAF1C recruits the RNF20/40 E3 ubiquitin-protein ligase complex and the E2 enzyme UBE2A or UBE2B to chromatin which mediate monoubiquitination of 'Lys-120' of histone H2B (H2BK120ub1); UB2A/B-mediated H2B ubiquitination is proposed to be coupled to transcription. PAF1C is involved in mRNA 3' end formation probably through association with cleavage and poly(A) factors. In case of infection by influenza A strain H3N2, PAF1C associates with viral NS1 protein, thereby regulating gene transcription. Required for mono- and trimethylation on histone H3 'Lys-4' (H3K4me3), dimethylation on histone H3 'Lys-79' (H3K4me3). Required for Hox gene transcription. Also acts as a component of the SKI complex, a multiprotein complex that assists the RNA-degrading exosome during the mRNA decay and quality-control pathways. The SKI complex catalyzes mRNA extraction from 80S ribosomal complexes in the 3'-5' direction and channels mRNA to the cytosolic exosome for degradation. SKI-mediated extraction of mRNA from stalled ribosomes allow binding of the Pelota-HBS1L complex and subsequent ribosome disassembly by ABCE1 for ribosome recycling. The sequence is that of Superkiller complex protein 8 (Skic8) from Rattus norvegicus (Rat).